Here is a 97-residue protein sequence, read N- to C-terminus: Large ribosomal subunit protein bL25 (97 aa).

The protein belongs to the bacterial ribosomal protein bL25 family. Part of the 50S ribosomal subunit; part of the 5S rRNA/L5/L18/L25 subcomplex. Contacts the 5S rRNA. Binds to the 5S rRNA independently of L5 and L18.

Functionally, this is one of the proteins that binds to the 5S RNA in the ribosome where it forms part of the central protuberance. The protein is Large ribosomal subunit protein bL25 of Blochmanniella pennsylvanica (strain BPEN).